The primary structure comprises 427 residues: ATP-sensitive inward rectifier potassium channel 12 (427 aa).

Over 1-77 (MTAASRANPY…LADMFTTCVD (77 aa)) the chain is Cytoplasmic. Cysteine 75 is subject to S-nitrosocysteine. The chain crosses the membrane as a helical span at residues 78-104 (IRWRYMLLIFSLAFLASWLLFGIIFWV). Positions 79 and 81 each coordinate a 1,2-diacyl-sn-glycero-3-phospho-(1D-myo-inositol-4,5-bisphosphate). At 105–129 (IAVAHGDLEPAEGRGRTPCVLQVHG) the chain is on the extracellular side. Cysteine 123 and cysteine 155 are joined by a disulfide. An intramembrane region (helical; Pore-forming) is located at residues 130-146 (FMAAFLFSIETQTTIGY). K(+)-binding residues include threonine 143, isoleucine 144, glycine 145, and tyrosine 146. The Selectivity filter signature appears at 143 to 148 (TIGYGL). Residues 147–155 (GLRCVTEEC) are Extracellular-facing. Residues 156–183 (PVAVFMVVAQSIVGCIIDSFMIGAIMAK) form a helical membrane-spanning segment. The a 1,2-diacyl-sn-glycero-3-phospho-(1D-myo-inositol-4,5-bisphosphate) site is built by lysine 183 and lysine 188. Over 184-427 (MGRPKKRAQT…ERPYRRESEI (244 aa)) the chain is Cytoplasmic. Positions 387–427 (DEEDEVATDRDGRSPQPEHDFDRLQASSGALERPYRRESEI) are disordered. The segment covering 393-409 (ATDRDGRSPQPEHDFDR) has biased composition (basic and acidic residues). Residues 425–427 (SEI) carry the PDZ-binding motif.

The protein belongs to the inward rectifier-type potassium channel (TC 1.A.2.1) family. KCNJ12 subfamily. Homotetramer. Forms heteromer with KCNJ4. Can form heteromeric channels with Kir2.6/KCNJ18. Association, via its PDZ-recognition domain, with LIN7A, LIN7B, LIN7C, DLG1, CASK and APBA1 plays a key role in its localization and trafficking. In terms of tissue distribution, highest level in cerebellum. Moderately found in kidney, forebrain and skeletal muscle. Not detected in uterus, liver and pancreas.

The protein localises to the membrane. Its subcellular location is the cell membrane. It localises to the sarcolemma. The protein resides in the T-tubule. It catalyses the reaction K(+)(in) = K(+)(out). Its activity is regulated as follows. Activated by phosphatidylinositol 4,5-biphosphate (PtdIns(4,5)P2). PtdIns(4,5)P2 binding to the cytoplasmic side of the channel triggers a conformation change leading to channel opening. Inhibited by Ba(2+). In terms of biological role, inward rectifying potassium channel that probably participates in controlling the resting membrane potential in electrically excitable cells. It probably participates in establishing action potential waveform and excitability of neuronal and muscle tissues. Inward rectifier potassium channels are characterized by a greater tendency to allow potassium to flow into the cell rather than out of it. Their voltage dependence is regulated by the concentration of extracellular potassium; as external potassium is raised, the voltage range of the channel opening shifts to more positive voltages. The inward rectification is mainly due to the blockage of outward current by internal magnesium. The chain is ATP-sensitive inward rectifier potassium channel 12 (Kcnj12) from Rattus norvegicus (Rat).